We begin with the raw amino-acid sequence, 208 residues long: N-(5'-phosphoribosyl)anthranilate isomerase (208 aa).

It belongs to the TrpF family.

The catalysed reaction is N-(5-phospho-beta-D-ribosyl)anthranilate = 1-(2-carboxyphenylamino)-1-deoxy-D-ribulose 5-phosphate. The protein operates within amino-acid biosynthesis; L-tryptophan biosynthesis; L-tryptophan from chorismate: step 3/5. The sequence is that of N-(5'-phosphoribosyl)anthranilate isomerase from Nitrosomonas eutropha (strain DSM 101675 / C91 / Nm57).